Here is a 166-residue protein sequence, read N- to C-terminus: Succinate dehydrogenase assembly factor 2, mitochondrial (166 aa).

A mitochondrion-targeting transit peptide spans 1-29; that stretch reads MAVVAVFPALARMLAVSRRRLVSPSLSMT.

Belongs to the SDHAF2 family. In terms of assembly, interacts with SDHA within the SDH catalytic dimer.

Its subcellular location is the mitochondrion matrix. Plays an essential role in the assembly of succinate dehydrogenase (SDH), an enzyme complex (also referred to as respiratory complex II) that is a component of both the tricarboxylic acid (TCA) cycle and the mitochondrial electron transport chain, and which couples the oxidation of succinate to fumarate with the reduction of ubiquinone (coenzyme Q) to ubiquinol. Required for flavinylation (covalent attachment of FAD) of the flavoprotein subunit SDHA of the SDH catalytic dimer. The sequence is that of Succinate dehydrogenase assembly factor 2, mitochondrial from Bos taurus (Bovine).